The primary structure comprises 234 residues: Large ribosomal subunit protein uL1 (234 aa).

It belongs to the universal ribosomal protein uL1 family. Part of the 50S ribosomal subunit.

Binds directly to 23S rRNA. The L1 stalk is quite mobile in the ribosome, and is involved in E site tRNA release. Its function is as follows. Protein L1 is also a translational repressor protein, it controls the translation of the L11 operon by binding to its mRNA. This Vibrio atlanticus (strain LGP32) (Vibrio splendidus (strain Mel32)) protein is Large ribosomal subunit protein uL1.